A 141-amino-acid polypeptide reads, in one-letter code: ATP synthase epsilon chain (141 aa).

This sequence belongs to the ATPase epsilon chain family. F-type ATPases have 2 components, CF(1) - the catalytic core - and CF(0) - the membrane proton channel. CF(1) has five subunits: alpha(3), beta(3), gamma(1), delta(1), epsilon(1). CF(0) has three main subunits: a, b and c.

The protein resides in the cell inner membrane. In terms of biological role, produces ATP from ADP in the presence of a proton gradient across the membrane. In Bordetella avium (strain 197N), this protein is ATP synthase epsilon chain.